The primary structure comprises 189 residues: MTRLIIGLGNPGDRYFETKHNVGFMLLDKIAKRENVTFNHDKIFQADIATTFIDGEKIYLVKPTTFMNESGKAVHALMTYYGLDATDILVAYDDLDMAVGKIRFRQKGSAGGHNGIKSIVKHIGTQEFDRIKIGIGRPKGKMSVVNHVLSGFDIEDRIEIDLALDKLDKAVNVYLEEDDFDTVMRKFNG.

TRNA is bound at residue Y15. The active-site Proton acceptor is H20. Residues F66, N68, and N114 each contribute to the tRNA site.

The protein belongs to the PTH family. In terms of assembly, monomer.

Its subcellular location is the cytoplasm. It catalyses the reaction an N-acyl-L-alpha-aminoacyl-tRNA + H2O = an N-acyl-L-amino acid + a tRNA + H(+). In terms of biological role, hydrolyzes ribosome-free peptidyl-tRNAs (with 1 or more amino acids incorporated), which drop off the ribosome during protein synthesis, or as a result of ribosome stalling. Its function is as follows. Catalyzes the release of premature peptidyl moieties from peptidyl-tRNA molecules trapped in stalled 50S ribosomal subunits, and thus maintains levels of free tRNAs and 50S ribosomes. The protein is Peptidyl-tRNA hydrolase of Streptococcus suis (strain 98HAH33).